Consider the following 652-residue polypeptide: MEKPPSPPPPPRAQTSPGLGKVGVLPNRRLGAVRGGLMSSPPGRRARLASPGTSRPSSEAREELRRRLRDLIEGNRVMIFSKSYCPHSTRVKELFSSLGVVYNILELDQVDDGASVQEVLTEISNQKTVPNIFVNKVHVGGCDRTFQAHQNGLLQKLLQDDSAHDYDLIIIGGGSGGLSCAKEAANLGKKVMVLDFVVPSPQGTTWGLGGTCVNVGCIPKKLMHQAALLGHALQDAKKYGWEYNQQVKHNWEAMTEAIQSHIGSLNWGYRVTLREKGVTYVNSFGEFVDLHKIKATNKKGQETFYTASKFVIATGERPRYLGIQGDKEYCITSDDLFSLPYCPGCTLVVGASYVGLECAGFLAGLGLDVTVMVRSVLLRGFDQEMAEKVGSYLEQQGVKFQRKFTPILVQQLEKGLPGKLKVVAKSTEGPETVEGIYNTVLLAIGRDSCTRKIGLEKIGVKINEKNGKIPVNDVEQTNVPHVYAIGDILDGKPELTPVAIQAGKLLARRLFGVSLEKCDYINIPTTVFTPLEYGCCGLSEEKAIEMYKKENLEVYHTLFWPLEWTVAGRDNNTCYAKIICNKFDNERVVGFHLLGPNAGEITQGFAAAMKCGLTKQLLDDTIGIHPTCGEVFTTLEITKSSGLDITQKGCUG.

The segment covering methionine 1–arginine 12 has biased composition (pro residues). Residues methionine 1–glutamate 62 form a disordered region. Asymmetric dimethylarginine; alternate is present on arginine 34. Arginine 34 carries the post-translational modification Omega-N-methylarginine; alternate. Serine 50 bears the Phosphoserine mark. The Glutaredoxin domain maps to arginine 65–aspartate 165. Aspartate 167–phenylalanine 196 serves as a coordination point for FAD. A disulfide bridge links cysteine 212 with cysteine 217. Position 388 is an N6-succinyllysine (lysine 388). Catalysis depends on histidine 625, which acts as the Proton acceptor. The cysteinyl-selenocysteine (Cys-Sec) cross-link spans cysteine 650 to selenocysteine 651. A non-standard amino acid (selenocysteine) is located at residue selenocysteine 651.

It belongs to the class-I pyridine nucleotide-disulfide oxidoreductase family. As to quaternary structure, homodimer. Requires FAD as cofactor. Expressed preferentially in testis where it is found in spermatids and spermatocytes but not in sperm. In elongating spermatids, expressed at the site of mitochondrial sheath formation. Low levels in other tissues including heart, lung, liver, kidney, brain, muscle and prostate.

Its subcellular location is the cytoplasm. It is found in the nucleus. It localises to the microsome. The protein resides in the endoplasmic reticulum. It catalyses the reaction [thioredoxin]-dithiol + NADP(+) = [thioredoxin]-disulfide + NADPH + H(+). Its function is as follows. Displays thioredoxin reductase, glutaredoxin and glutathione reductase activities. Catalyzes disulfide bond isomerization. Promotes disulfide bond formation between GPX4 and various sperm proteins and may play a role in sperm maturation by promoting formation of sperm structural components. This Mus musculus (Mouse) protein is Thioredoxin reductase 3.